Reading from the N-terminus, the 917-residue chain is ABC transporter A family member 12 (917 aa).

The next 6 membrane-spanning stretches (helical) occupy residues 34 to 54, 323 to 343, 377 to 397, 409 to 429, 435 to 455, and 508 to 528; these read LILV…VLDA, IASL…FPVI, FLTI…AIGL, FVFY…VSSI, TVTV…SFLF, and GEVF…AYYI. Residues 595-832 enclose the ABC transporter domain; the sequence is ILCDNLKKVY…YGGSYVFTMT (238 aa). 633 to 640 contributes to the ATP binding site; that stretch reads GPNGAGKT.

This sequence belongs to the ABC transporter superfamily. ABCA family. CPR flippase (TC 3.A.1.211) subfamily.

It is found in the membrane. The sequence is that of ABC transporter A family member 12 (ABCA12) from Arabidopsis thaliana (Mouse-ear cress).